Reading from the N-terminus, the 551-residue chain is Chaperonin GroEL (551 aa).

ATP-binding positions include 30–33 (TLGP), lysine 51, 87–91 (DGTTT), glycine 415, 479–481 (NAA), and aspartate 495.

It belongs to the chaperonin (HSP60) family. Forms a cylinder of 14 subunits composed of two heptameric rings stacked back-to-back. Interacts with the co-chaperonin GroES.

It is found in the cytoplasm. The catalysed reaction is ATP + H2O + a folded polypeptide = ADP + phosphate + an unfolded polypeptide.. Its function is as follows. Together with its co-chaperonin GroES, plays an essential role in assisting protein folding. The GroEL-GroES system forms a nano-cage that allows encapsulation of the non-native substrate proteins and provides a physical environment optimized to promote and accelerate protein folding. The chain is Chaperonin GroEL from Acidithiobacillus ferrooxidans (strain ATCC 23270 / DSM 14882 / CIP 104768 / NCIMB 8455) (Ferrobacillus ferrooxidans (strain ATCC 23270)).